The following is a 207-amino-acid chain: Large ribosomal subunit protein uL3 (207 aa).

This sequence belongs to the universal ribosomal protein uL3 family. As to quaternary structure, part of the 50S ribosomal subunit. Forms a cluster with proteins L14 and L19.

Functionally, one of the primary rRNA binding proteins, it binds directly near the 3'-end of the 23S rRNA, where it nucleates assembly of the 50S subunit. In Thermotoga maritima (strain ATCC 43589 / DSM 3109 / JCM 10099 / NBRC 100826 / MSB8), this protein is Large ribosomal subunit protein uL3.